A 388-amino-acid polypeptide reads, in one-letter code: S-adenosylmethionine synthase (388 aa).

His17 serves as a coordination point for ATP. Asp19 contributes to the Mg(2+) binding site. Glu45 is a binding site for K(+). L-methionine-binding residues include Glu58 and Gln106. The tract at residues 106 to 116 (QSAHIAQGVDK) is flexible loop. ATP contacts are provided by residues 166–168 (DAK), Asp241, 247–248 (RK), Ala264, and Lys268. Residue Asp241 coordinates L-methionine. Position 272 (Lys272) interacts with L-methionine.

The protein belongs to the AdoMet synthase family. Homotetramer; dimer of dimers. It depends on Mg(2+) as a cofactor. K(+) is required as a cofactor.

Its subcellular location is the cytoplasm. The enzyme catalyses L-methionine + ATP + H2O = S-adenosyl-L-methionine + phosphate + diphosphate. Its pathway is amino-acid biosynthesis; S-adenosyl-L-methionine biosynthesis; S-adenosyl-L-methionine from L-methionine: step 1/1. Its function is as follows. Catalyzes the formation of S-adenosylmethionine (AdoMet) from methionine and ATP. The overall synthetic reaction is composed of two sequential steps, AdoMet formation and the subsequent tripolyphosphate hydrolysis which occurs prior to release of AdoMet from the enzyme. In Cereibacter sphaeroides (strain ATCC 17023 / DSM 158 / JCM 6121 / CCUG 31486 / LMG 2827 / NBRC 12203 / NCIMB 8253 / ATH 2.4.1.) (Rhodobacter sphaeroides), this protein is S-adenosylmethionine synthase.